The chain runs to 304 residues: Ornithine carbamoyltransferase (304 aa).

Carbamoyl phosphate is bound by residues 53–56, Q80, R104, and 131–134; these read STRT and HPCQ. L-ornithine-binding positions include N162, D219, and 223-224; that span reads SM. Residues 259-260 and R287 contribute to the carbamoyl phosphate site; that span reads CL.

It belongs to the aspartate/ornithine carbamoyltransferase superfamily. OTCase family.

It localises to the cytoplasm. The enzyme catalyses carbamoyl phosphate + L-ornithine = L-citrulline + phosphate + H(+). The protein operates within amino-acid biosynthesis; L-arginine biosynthesis; L-arginine from L-ornithine and carbamoyl phosphate: step 1/3. Reversibly catalyzes the transfer of the carbamoyl group from carbamoyl phosphate (CP) to the N(epsilon) atom of ornithine (ORN) to produce L-citrulline. This Nitrosococcus oceani (strain ATCC 19707 / BCRC 17464 / JCM 30415 / NCIMB 11848 / C-107) protein is Ornithine carbamoyltransferase.